The primary structure comprises 105 residues: Large ribosomal subunit protein uL24 (105 aa).

Belongs to the universal ribosomal protein uL24 family. Part of the 50S ribosomal subunit.

In terms of biological role, one of two assembly initiator proteins, it binds directly to the 5'-end of the 23S rRNA, where it nucleates assembly of the 50S subunit. Functionally, one of the proteins that surrounds the polypeptide exit tunnel on the outside of the subunit. This is Large ribosomal subunit protein uL24 from Pseudothermotoga lettingae (strain ATCC BAA-301 / DSM 14385 / NBRC 107922 / TMO) (Thermotoga lettingae).